The chain runs to 123 residues: Sirohydrochlorin cobaltochelatase (123 aa).

The active-site Proton acceptor is the H9. H9 serves as a coordination point for Co(2+). Residues E43 and 68–73 (FAAGMH) each bind substrate. H73 lines the Co(2+) pocket.

Belongs to the CbiX family. CbiXS subfamily. In terms of assembly, homotetramer; dimer of dimers.

It carries out the reaction Co-sirohydrochlorin + 2 H(+) = sirohydrochlorin + Co(2+). Its pathway is cofactor biosynthesis; adenosylcobalamin biosynthesis; cob(II)yrinate a,c-diamide from sirohydrochlorin (anaerobic route): step 1/10. Functionally, catalyzes the insertion of Co(2+) into sirohydrochlorin as part of the anaerobic pathway to cobalamin biosynthesis. The chain is Sirohydrochlorin cobaltochelatase from Sulfolobus acidocaldarius (strain ATCC 33909 / DSM 639 / JCM 8929 / NBRC 15157 / NCIMB 11770).